We begin with the raw amino-acid sequence, 171 residues long: MPLLDSFTVDHTRMEAPAVRVAKTMHTPSGDAITVFDLRFCVPNKEVMPEKGIHTLEHLFAGFMRDHLNGNGVEIIDISPMGCRTGFYMSLIGTPEETRVADAWKAAMADVLKVKEQNQIPELNVYQCGTYHMHSLEEAQEIARHILDRDVRVNSNEELALPKETLKELHI.

Fe cation contacts are provided by His54, His58, and Cys128.

The protein belongs to the LuxS family. In terms of assembly, homodimer. Requires Fe cation as cofactor.

It carries out the reaction S-(5-deoxy-D-ribos-5-yl)-L-homocysteine = (S)-4,5-dihydroxypentane-2,3-dione + L-homocysteine. Its function is as follows. Involved in the synthesis of autoinducer 2 (AI-2) which is secreted by bacteria and is used to communicate both the cell density and the metabolic potential of the environment. The regulation of gene expression in response to changes in cell density is called quorum sensing. Catalyzes the transformation of S-ribosylhomocysteine (RHC) to homocysteine (HC) and 4,5-dihydroxy-2,3-pentadione (DPD). This chain is S-ribosylhomocysteine lyase, found in Enterobacter sp. (strain 638).